The chain runs to 147 residues: Globin, polymeric component P2 (147 aa).

A Globin domain is found at 2 to 146; it reads PLTADQVAAL…ISDALVAGLE (145 aa). Position 96 (His96) interacts with heme b.

It belongs to the globin family. As to quaternary structure, polymer.

The protein is Globin, polymeric component P2 of Glycera dibranchiata (Bloodworm).